A 424-amino-acid polypeptide reads, in one-letter code: Zinc finger protein 597 (424 aa).

Residues isoleucine 14 to proline 88 form the KRAB domain. C2H2-type zinc fingers lie at residues tyrosine 156–histidine 178, histidine 184–histidine 206, tyrosine 212–histidine 234, and tyrosine 240–histidine 262. Lysine 300 is covalently cross-linked (Glycyl lysine isopeptide (Lys-Gly) (interchain with G-Cter in SUMO2)). 3 C2H2-type zinc fingers span residues leucine 341–histidine 363, histidine 369–histidine 391, and phenylalanine 397–histidine 419.

Belongs to the krueppel C2H2-type zinc-finger protein family.

The protein localises to the nucleus. Its function is as follows. May be involved in transcriptional regulation. This Homo sapiens (Human) protein is Zinc finger protein 597 (ZNF597).